Reading from the N-terminus, the 491-residue chain is UDP-N-acetylmuramate--L-alanine ligase (491 aa).

126 to 132 contacts ATP; it reads GTHGKTT.

It belongs to the MurCDEF family.

It localises to the cytoplasm. It catalyses the reaction UDP-N-acetyl-alpha-D-muramate + L-alanine + ATP = UDP-N-acetyl-alpha-D-muramoyl-L-alanine + ADP + phosphate + H(+). It functions in the pathway cell wall biogenesis; peptidoglycan biosynthesis. Functionally, cell wall formation. The protein is UDP-N-acetylmuramate--L-alanine ligase of Shigella flexneri serotype 5b (strain 8401).